The chain runs to 2767 residues: MSALLNEIQRILGDLQSGKAASRNKGIQQLDEKLSSCREDLDKLFLSKTSDISWTTIFEASKEALFKQAGNLEDVNEKVFKTLAGKNYLYDNVLEKITQFNLEAGSQTSGNGHFLAKTSIFSAFEDGIKMRVVVKYFGDRILSLLEKGIYSSVSYVRDLKINEYSRILSYLFELNVDMDEVLRTRILKCITRTVSLAKDRVQLHVDLVEYLPELSSFALSAFGARKTEIVRVYLIFASELAVNYNHQLNVHMQEILPKLCEYHDEDAFRDDTRNLFFQCVSKSLHSMYLKMDMCDFNTLGVPVHEKWPQTLLRLKTIVNVEIRKNSWARCKNALLSNNKFSDPFIKMSALAMYIVLWHLETKKADENGEGDAPKKIPKPADKMETIFSLIDKKENTFNDVWLAIFTEILQLSSVILNVANYQMALTTVAEIMQMYGNAKNLRNLRLCLAHLLTKEQELLHSKSIREDFLGELWSQMANQLISETTTNSEEIKEKQLVLQMLIRHNKLNQKLSSTLLNNIISNEMLKRNECLATIREIFIHADKCGQDKASADLEPIIAWAYGSADRFIAAQMIHNIDSIDAQLQADTFAISIINFLDVQQLRQISQSEHIVPSTERNLLAYKYNEQLICFDKDYATPFESITHIQSETKNCLIQSNYDCLMRGLNFEIAKENKPAAIIKNLNSLLKLICTMERLLHYKVFDADTYTGCPLIKRIGLYLSHIEFQLKANGAEILDKSDLPEILRLEIYVLDVFRTNLVLLDYLERQPIEMLVEFVGAALKLHSMQRERSVDADHGTITRLCLNILAGLCAYNSHRDEAFEHIVKVTMRWHPQDVLIVTKMLCSCQTISEASSSWLVSKLKTLFQQHHQDAELMDKVVQHMPTIFYFVRHKENHLDDMLMALNSLLRIAIKKSYTSNLTAKIVRCVGLIAQRCPDIYLLENFAVICKSTAKFITMPTLEVRFATLFTFTILLESNCVTSDAIGHSRTHWDFCQELYESIEFKKLTYNNEDAIQNSNALIVQMLIAIFLRSSFHQEIALKELLHHCALRRLTEREFISLQSMSSCHRQTVRDLIRPFAAILLHHWSSKRWPISKFPYFLCYSTKSEFRKTHASEIMAYTFLYGKTEDIERCSKSISEELALPILASFLLIKNSSCSESEGQNFKEHLQLLSENLSYSQLNATDVDLDLDILCYVISMLHDPQEMMRLFGSLAICNRTASWYSLSGESLFKCLNFHIDPEMRPSMDSRIQSMTTLQTKHSRVLVDIFGRLKTNCYSASFSSQALHDFFLYCEVADAVYDAARKNETIVTQCSFFVRDIWFFVVRLLIHTKFIRVQMAALTFLELLLNKHNFRLDDYQNHFGDIAKLLSNFQLCCEAKEVREKTMSIVMYILESKKGHINLNSFLEETTDCEFLKPLREDCKSSQPNIDRADVANYLRSFLLSPTPERLRDLRTYIAEHKDKVQEHEKLLFGVINKLIQMTRDAHNKTTSIDSLKCLAQIGPLKISTVSYYFQTDFEAFEKSNGEPMEAFLGVVCHSLDTSLFQFDPKTHEGLVSVAIQVVNSKPGSNIMERYKNLRIFADKSTASTFLHSNKQIRRIDWLSILKATKSLSYEPWMCAFVSKVFQMCGWLGFDKLAATSFAFAKTCLLPFIKLLLENSLEHVESLSQMLDYFFEGFTSSTAPNSQEIFRNKRAIKKFLHICEYIRIFNNWTIPINLSNVVMASNHCQAYFLSIMYLELWACSESPKSKADFLDNECFQDGAKKAYESIGCLDAIPGFVNPMRSRLDFLGHGSNLSTILLESDHLDRASGQLCIDIMKGNGLWSFAKLQQHQNIEPDYEIFWRLGQWDSLTDPKHQQNQTVVRTSLDLEQEFKRHHFVALRSIGQREEENSLSAIEQAYSCVRDILMEISVECLQSVYKYLTWLCSLQQAEDFCQIQFGTQLDPASTTKIFRKWQTELELKYGNFSCKEYVIAHQIALLKLAGTRASRRMSEFYQKDPISTYLMKGIEECKSAGKLNLAAKYTATLRELPNIRESIKISVLLEDAEINLKMGNQQIAKAILDYVTNNNEFVYCVQRVPALRMQGEFLLDCNAETLSWVQSHKFNNSLKLIDDFVQHRQTLSEKYRDIFDWHQLDAYASKQRTAAYATIAKYADREYQQLHDYRHSQEYQTLKDIIEQNRQTAEKVTQRENQDRRVISVQMKRYASLDEQQLNQIEEKLTEYLRLALTNYMAYCRLDSGFSSAAIYRIISLWFTNATSKQCQECIKDEILTVPSYKFICAANQLTARLNSKNTSLLKGLTDLLVQCGKDHPYHTFYQLYPLVFAHLDGENSNTERSGIARKIIAMICEKNGTAGECSKQLESLLPALITFANEGKTNDNRPVSDSVRNKQFDKVRRWRNLNAVHCPTLELPVMPSKEYSIISVVKWTNETTQCGGLNAPVKIMCVCSDGKIRAQLVKGKDDLRQDAVMQQVFGIVNELLNQDSEFIERKLKLRTYKVTPLSMRSGILEWCTNSVPVGHYLVVEGKGGAHARYRPNDWNNNKCRKLSSDHLKSPKETRYAIYKKICENIKPVFHYFLLEKFPIPGVWFERRLAYTNSVATTSMVGYVLGLGDRHTQNILVDQQTAEVIHIDFGIAFEQGKIQTTPETVPFRLTRDFVAPMGICGTKGVFAKSCEATMHILRRYKSVFTTILEVLLYDPLFIWGVLKKKQSPQQSGEESVNLVAQRALLLVQNKLDGREAGTMGDSNVEAQVERLINEATLPSNLCMLFPGWDPHL.

Positions asparagine 1713–alanine 2317 constitute an FAT domain. One can recognise a PI3K/PI4K catalytic domain in the interval tryptophan 2419–methionine 2734. The G-loop stretch occupies residues glutamine 2425–alanine 2431. Positions glycine 2601–asparagine 2609 are catalytic loop. The interval histidine 2621–threonine 2645 is activation loop. One can recognise an FATC domain in the interval glycine 2735–leucine 2767.

It belongs to the PI3/PI4-kinase family. ATM subfamily.

It localises to the nucleus. The protein resides in the chromosome. It is found in the telomere. The catalysed reaction is L-seryl-[protein] + ATP = O-phospho-L-seryl-[protein] + ADP + H(+). It catalyses the reaction L-threonyl-[protein] + ATP = O-phospho-L-threonyl-[protein] + ADP + H(+). In terms of biological role, serine/threonine-protein kinase which recognizes the substrate consensus sequence [ST]-Q. Required to suppress spontaneous apoptosis of proliferating cells during development, and for their proper differentiation. Required for female fertility. Protects telomeres from fusion, maybe by recruiting or maintaining chromatin-modifying complexes such as Su(var)205/HP1. May activate checkpoint signaling in response to DNA double-stranded breaks induced by low-dose ionizing radiation. May phosphorylate histone H2AV. The polypeptide is Serine/threonine-protein kinase ATM (tefu) (Drosophila melanogaster (Fruit fly)).